The following is a 130-amino-acid chain: Tripartite terminase subunit 2 (130 aa).

It belongs to the herpesviridae TRM2 protein family. Associates with TRM1 and TRM3 to form the tripartite terminase complex.

The protein resides in the host nucleus. Component of the molecular motor that translocates viral genomic DNA in empty capsid during DNA packaging. Forms a tripartite terminase complex together with TRM1 and TRM3 in the host cytoplasm. Once the complex reaches the host nucleus, it interacts with the capsid portal vertex. This portal forms a ring in which genomic DNA is translocated into the capsid. This is Tripartite terminase subunit 2 from Homo sapiens (Human).